We begin with the raw amino-acid sequence, 290 residues long: Glutaredoxin domain-containing cysteine-rich protein 1 (290 aa).

Residues 127-234 (LQQPSADLEF…DLLTKIERVQ (108 aa)) form the Glutaredoxin domain.

It belongs to the GRXCR1 family. As to expression, in the inner ear, expressed predominantly in sensory hair cells and their stereocilia bundles with higher levels in outer hair cells (OHC) at P1 and in inner hair cells (IHC) at P5. At P1, expression is prominent in each row of stereocilia within bundles including immature shorter stereocilia. Expression is also observed in apical microvilli of sensory cells at P1 and in kinocilia at P1 and P5. In the adult, expression is localized throughout the length of the stereocilia of both OHC and IHC (at protein level).

Its subcellular location is the cell projection. It is found in the stereocilium. It localises to the microvillus. The protein resides in the kinocilium. Functionally, may play a role in actin filament architecture in developing stereocilia of sensory cells. The sequence is that of Glutaredoxin domain-containing cysteine-rich protein 1 (Grxcr1) from Mus musculus (Mouse).